We begin with the raw amino-acid sequence, 179 residues long: MKKHHVDVLISENDVHARIAELGAQITKFYQEKQIDNLVVVGLLRGSFMFMADIVRQINLPVEIEFMTTSSYGTGMTTNHDVRITKDLDGDIKGKHVLIVEDIIDTGYTLEKVRDILNLREPASLTICTLLDKPSRREVEVPVEWVGFEIPDEFVVGYGIDYAQRHRNLGYIGKVVLEE.

The diphosphate site is built by R45 and G46. GMP is bound at residue E101. E101 lines the IMP pocket. 2 residues coordinate Mg(2+): E101 and D102. The Proton acceptor role is filled by D105. Residues 105-110 (DTGYTL), K133, and D161 contribute to the GMP site. Residues 105–110 (DTGYTL) and K133 contribute to the IMP site. R167 is a diphosphate binding site.

The protein belongs to the purine/pyrimidine phosphoribosyltransferase family. As to quaternary structure, homotetramer. Requires Mg(2+) as cofactor.

Its subcellular location is the cytoplasm. The enzyme catalyses IMP + diphosphate = hypoxanthine + 5-phospho-alpha-D-ribose 1-diphosphate. It carries out the reaction GMP + diphosphate = guanine + 5-phospho-alpha-D-ribose 1-diphosphate. The protein operates within purine metabolism; IMP biosynthesis via salvage pathway; IMP from hypoxanthine: step 1/1. Its function is as follows. Purine salvage pathway enzyme which catalyzes the transfer of the ribosyl-5-phosphate group from 5-phospho-alpha-D-ribose 1-diphosphate (PRPP) to the N9 position of hypoxanthine to yield IMP (inosine 5'-monophosphate). To a lesser extent, can also act on guanine leading to GMP, but shows a highly less efficient activity with xanthine. This is Hypoxanthine phosphoribosyltransferase (hpt) from Haemophilus influenzae (strain ATCC 51907 / DSM 11121 / KW20 / Rd).